A 248-amino-acid polypeptide reads, in one-letter code: MAGHSQFKNIMHRKGRQDAQKSKLFGKLAREITVAAKLGTPDPAMNPRLRAAVIAARAENMPKDNIERAIKKALGSDGENYDEIRYEGYGPGGVAVIVEALTDNRNRAASDIRSFFTKSGGNLGETGSVSFMFDRTGIIEYDRSVASDDAVLDAAIEAGADDVVSGEGGHEIYASTEGYRDVAKALEAKFGEPRKAALIWKPQNTVAVDDETGEKLLKLMDLLNEHDDVQNVYANFEVSDALVAKMGG.

Residues 1 to 21 are disordered; sequence MAGHSQFKNIMHRKGRQDAQK.

Belongs to the TACO1 family.

It is found in the cytoplasm. The protein is Probable transcriptional regulatory protein blr1534 of Bradyrhizobium diazoefficiens (strain JCM 10833 / BCRC 13528 / IAM 13628 / NBRC 14792 / USDA 110).